The following is a 153-amino-acid chain: NADPH-dependent 7-cyano-7-deazaguanine reductase (153 aa).

Cys51 acts as the Thioimide intermediate in catalysis. Asp58 serves as the catalytic Proton donor. Substrate-binding positions include Leu73–Ser75 and His92–Glu93.

The protein belongs to the GTP cyclohydrolase I family. QueF type 1 subfamily.

It localises to the cytoplasm. The enzyme catalyses 7-aminomethyl-7-carbaguanine + 2 NADP(+) = 7-cyano-7-deazaguanine + 2 NADPH + 3 H(+). It functions in the pathway tRNA modification; tRNA-queuosine biosynthesis. In terms of biological role, catalyzes the NADPH-dependent reduction of 7-cyano-7-deazaguanine (preQ0) to 7-aminomethyl-7-deazaguanine (preQ1). The protein is NADPH-dependent 7-cyano-7-deazaguanine reductase of Bradyrhizobium diazoefficiens (strain JCM 10833 / BCRC 13528 / IAM 13628 / NBRC 14792 / USDA 110).